Here is a 497-residue protein sequence, read N- to C-terminus: Protein adenylyltransferase Fic (497 aa).

The interval 1–30 (MGATDQALEAESKTTEPPKTPPVPEQHDRP) is disordered. A helical membrane pass occupies residues 38-58 (LCHLLVLLFSGGLAAITLHIF). TPR repeat units follow at residues 123–156 (ALGALRLAQDMYLAGKDDKAARLFQHSLALAPRH) and 157–191 (PTVLLRYGEFLEHSQRNIVLADQYYFQALSISPSN). Positions 248 to 253 (TVGIEG) match the Inhibitory (S/T)XXXE(G/N) motif motif. ATP contacts are provided by residues glutamate 252 and 333 to 336 (VGGH). In terms of domain architecture, Fido spans 302–437 (ITIKDILELH…IRPFVRFIAD (136 aa)). The active site involves histidine 380. ATP contacts are provided by residues 384–391 (DGNGRTSR), 416–417 (YY), and asparagine 424. Residues 468-497 (GEGVPQLQSSQMGGGASIPEFHESGSGSLP) form a disordered region.

The protein belongs to the fic family. In terms of assembly, homodimer.

It localises to the membrane. The catalysed reaction is L-tyrosyl-[protein] + ATP = O-(5'-adenylyl)-L-tyrosyl-[protein] + diphosphate. It catalyses the reaction L-threonyl-[protein] + ATP = 3-O-(5'-adenylyl)-L-threonyl-[protein] + diphosphate. It carries out the reaction 3-O-(5'-adenylyl)-L-threonyl-[protein] + H2O = L-threonyl-[protein] + AMP + H(+). Its activity is regulated as follows. The side chain of Glu-252 determines which of the two opposing activities (AMPylase or de-AMPylase) will take place. In response to endoplasmic reticulum stress, mediates de-AMPylase activity. Adenylyltransferase activity is inhibited by the inhibitory helix present at the N-terminus: Glu-252 binds ATP and competes with ATP-binding at Arg-391, thereby preventing adenylyltransferase activity. In unstressed cells, disengagement of Glu-252 promotes adenylyltransferase activity. Activation dissociates ATP-binding from Glu-252, allowing ordered binding of the entire ATP moiety with the alpha-phosphate in an orientation that is productive for accepting an incoming target hydroxyl side chain. Functionally, protein that can both mediate the addition of adenosine 5'-monophosphate (AMP) to specific residues of target proteins (AMPylation), and the removal of the same modification from target proteins (de-AMPylation), depending on the context. The side chain of Glu-252 determines which of the two opposing activities (AMPylase or de-AMPylase) will take place. Acts as a key regulator of the unfolded protein response (UPR) by mediating AMPylation or de-AMPylation of Hsc70-3/BiP. In unstressed cells, acts as an adenylyltransferase by mediating AMPylation of Hsc70-3/BiP at 'Thr-518', thereby inactivating it. In response to endoplasmic reticulum stress, acts as a phosphodiesterase by mediating removal of ATP (de-AMPylation) from Hsc70-3/BiP at 'Thr-518', leading to restore HSPA5/BiP activity. This Drosophila ananassae (Fruit fly) protein is Protein adenylyltransferase Fic.